We begin with the raw amino-acid sequence, 261 residues long: Ribosomal RNA small subunit methyltransferase A (261 aa).

S-adenosyl-L-methionine-binding residues include asparagine 20, leucine 22, glycine 47, glutamate 68, aspartate 90, and asparagine 110.

This sequence belongs to the class I-like SAM-binding methyltransferase superfamily. rRNA adenine N(6)-methyltransferase family. RsmA subfamily.

It is found in the cytoplasm. The enzyme catalyses adenosine(1518)/adenosine(1519) in 16S rRNA + 4 S-adenosyl-L-methionine = N(6)-dimethyladenosine(1518)/N(6)-dimethyladenosine(1519) in 16S rRNA + 4 S-adenosyl-L-homocysteine + 4 H(+). Specifically dimethylates two adjacent adenosines (A1518 and A1519) in the loop of a conserved hairpin near the 3'-end of 16S rRNA in the 30S particle. May play a critical role in biogenesis of 30S subunits. This chain is Ribosomal RNA small subunit methyltransferase A, found in Prosthecochloris aestuarii (strain DSM 271 / SK 413).